A 320-amino-acid polypeptide reads, in one-letter code: MAAHYLEFERPIADLEAKIEELSRLSETASPGAFDGEIESLRARAQDMRREAYANLDAWQKTQVARHPDRPHFVDYVAALIEDFQELRGDRKFADDQAIMGGLGRFRGMPVVVMGHEKGRDTVTRVKHNFGYARPEGYRKAIRLMELAERFNLPVVSFVDTAGAYPGVASEERGVAEAIARSTEKCLMLETPNVAVITGEGGSGGAIAIAATSRVLILEHAIYSVIAPEGANSILWRGARTAGEAAKAMKITAQDLERMKIVDRIIREPAGGAHSDPEAAMQAVGDAVEEELKALLALDAATLKAQRAERFYAIGRSGLQ.

The CoA carboxyltransferase C-terminal domain maps to Ala33 to Ala294.

It belongs to the AccA family. In terms of assembly, acetyl-CoA carboxylase is a heterohexamer composed of biotin carboxyl carrier protein (AccB), biotin carboxylase (AccC) and two subunits each of ACCase subunit alpha (AccA) and ACCase subunit beta (AccD).

The protein resides in the cytoplasm. It carries out the reaction N(6)-carboxybiotinyl-L-lysyl-[protein] + acetyl-CoA = N(6)-biotinyl-L-lysyl-[protein] + malonyl-CoA. It functions in the pathway lipid metabolism; malonyl-CoA biosynthesis; malonyl-CoA from acetyl-CoA: step 1/1. Its function is as follows. Component of the acetyl coenzyme A carboxylase (ACC) complex. First, biotin carboxylase catalyzes the carboxylation of biotin on its carrier protein (BCCP) and then the CO(2) group is transferred by the carboxyltransferase to acetyl-CoA to form malonyl-CoA. This chain is Acetyl-coenzyme A carboxylase carboxyl transferase subunit alpha, found in Phenylobacterium zucineum (strain HLK1).